Reading from the N-terminus, the 273-residue chain is Dermonecrotic toxin LhSicTox-alphaIA1iii (273 aa).

H5 is a catalytic residue. Mg(2+)-binding residues include E25 and D27. H41 acts as the Nucleophile in catalysis. Cystine bridges form between C45-C51 and C47-C190. Mg(2+) is bound at residue D85.

Belongs to the arthropod phospholipase D family. Class II subfamily. Mg(2+) is required as a cofactor. As to expression, expressed by the venom gland.

Its subcellular location is the secreted. It catalyses the reaction an N-(acyl)-sphingosylphosphocholine = an N-(acyl)-sphingosyl-1,3-cyclic phosphate + choline. The catalysed reaction is an N-(acyl)-sphingosylphosphoethanolamine = an N-(acyl)-sphingosyl-1,3-cyclic phosphate + ethanolamine. It carries out the reaction a 1-acyl-sn-glycero-3-phosphocholine = a 1-acyl-sn-glycero-2,3-cyclic phosphate + choline. The enzyme catalyses a 1-acyl-sn-glycero-3-phosphoethanolamine = a 1-acyl-sn-glycero-2,3-cyclic phosphate + ethanolamine. Functionally, dermonecrotic toxins cleave the phosphodiester linkage between the phosphate and headgroup of certain phospholipids (sphingolipid and lysolipid substrates), forming an alcohol (often choline) and a cyclic phosphate. This toxin acts on sphingomyelin (SM). It may also act on ceramide phosphoethanolamine (CPE), lysophosphatidylcholine (LPC) and lysophosphatidylethanolamine (LPE), but not on lysophosphatidylserine (LPS), and lysophosphatidylglycerol (LPG). It acts by transphosphatidylation, releasing exclusively cyclic phosphate products as second products. Induces dermonecrosis, hemolysis, increased vascular permeability, edema, inflammatory response, and platelet aggregation. The chain is Dermonecrotic toxin LhSicTox-alphaIA1iii from Loxosceles hirsuta (Recluse spider).